Reading from the N-terminus, the 523-residue chain is Flavin-dependent halogenase armH5 (523 aa).

FAD contacts are provided by Gly-17, Ala-20, and Glu-50. Positions 328 and 329 each coordinate chloride. Val-330 contributes to the FAD binding site.

Belongs to the flavin-dependent halogenase family.

It carries out the reaction melleolide F + FADH2 + chloride + O2 = 6'-chloromelleolide F + FAD + 2 H2O + H(+). Flavin-dependent halogenase involved in the biosynthesis of melleolides, a range of antifungal and phytotoxic polyketide derivatives composed of an orsellinic acid (OA) moiety esterified to various sesquiterpene alcohols. The halogenase catalyzes the transfer of a single chlorine atom to the melleolide backbone, resulting in a 6'-chloromelleolide product. The enzyme acts on free substrate and does not depend on carrier-protein-dependent acceptor molecules. This is Flavin-dependent halogenase armH5 from Armillaria mellea (Honey mushroom).